A 341-amino-acid polypeptide reads, in one-letter code: MPSIRLADLAQQLDAELHGDGDIVITGVASMQSAQTGHITFMVNPKYREHLGLCQASAVVMTQDDLPFAKSAALVVKNPYLTYARMAQILDTTPQPAQNIAPSAVIDATAKLGNNVSIGANAVIESGVELGDNVIIGAGCFVGKNSKIGAGSRLWANVTIYHEIQIGQNCLIQSGTVVGADGFGYANDRGNWVKIPQIGRVIIGDRVEIGACTTIDRGALDDTIIGNGVIIDNQCQIAHNVVIGDNTAVAGGVIMAGSLKIGRYCMIGGASVINGHMEICDKVTVTGMGMVMRPITEPGVYSSGIPLQPNKVWRKTAALVMNIDDMSKRLKSLERKVNQQD.

The Proton acceptor role is filled by His239.

The protein belongs to the transferase hexapeptide repeat family. LpxD subfamily. In terms of assembly, homotrimer.

It carries out the reaction a UDP-3-O-[(3R)-3-hydroxyacyl]-alpha-D-glucosamine + a (3R)-hydroxyacyl-[ACP] = a UDP-2-N,3-O-bis[(3R)-3-hydroxyacyl]-alpha-D-glucosamine + holo-[ACP] + H(+). The enzyme catalyses UDP-3-O-[(3R)-3-hydroxytetradecanoyl]-alpha-D-glucosamine + (3R)-hydroxytetradecanoyl-[ACP] = UDP-2-N,3-O-bis[(3R)-3-hydroxytetradecanoyl]-alpha-D-glucosamine + holo-[ACP] + H(+). It participates in glycolipid biosynthesis; lipid IV(A) biosynthesis; lipid IV(A) from (3R)-3-hydroxytetradecanoyl-[acyl-carrier-protein] and UDP-N-acetyl-alpha-D-glucosamine: step 3/6. Its function is as follows. Catalyzes the N-acylation of UDP-3-O-(hydroxytetradecanoyl)glucosamine using 3-hydroxytetradecanoyl-ACP as the acyl donor. Is involved in the biosynthesis of lipid A, a phosphorylated glycolipid that anchors the lipopolysaccharide to the outer membrane of the cell. The chain is UDP-3-O-(3-hydroxymyristoyl)glucosamine N-acyltransferase from Shigella dysenteriae serotype 1 (strain Sd197).